Here is a 477-residue protein sequence, read N- to C-terminus: Bifunctional protein HldE (477 aa).

A ribokinase region spans residues 1–318; that stretch reads MKVTLPDFRR…ENAIRGRADT (318 aa). 195–198 provides a ligand contact to ATP; sequence NLSE. D264 is an active-site residue. Residues 344–477 are cytidylyltransferase; it reads MTNGVFDILH…INIIRQGQND (134 aa).

In the N-terminal section; belongs to the carbohydrate kinase PfkB family. The protein in the C-terminal section; belongs to the cytidylyltransferase family. As to quaternary structure, homodimer.

It carries out the reaction D-glycero-beta-D-manno-heptose 7-phosphate + ATP = D-glycero-beta-D-manno-heptose 1,7-bisphosphate + ADP + H(+). The enzyme catalyses D-glycero-beta-D-manno-heptose 1-phosphate + ATP + H(+) = ADP-D-glycero-beta-D-manno-heptose + diphosphate. It functions in the pathway nucleotide-sugar biosynthesis; ADP-L-glycero-beta-D-manno-heptose biosynthesis; ADP-L-glycero-beta-D-manno-heptose from D-glycero-beta-D-manno-heptose 7-phosphate: step 1/4. It participates in nucleotide-sugar biosynthesis; ADP-L-glycero-beta-D-manno-heptose biosynthesis; ADP-L-glycero-beta-D-manno-heptose from D-glycero-beta-D-manno-heptose 7-phosphate: step 3/4. Catalyzes the phosphorylation of D-glycero-D-manno-heptose 7-phosphate at the C-1 position to selectively form D-glycero-beta-D-manno-heptose-1,7-bisphosphate. In terms of biological role, catalyzes the ADP transfer from ATP to D-glycero-beta-D-manno-heptose 1-phosphate, yielding ADP-D-glycero-beta-D-manno-heptose. This Edwardsiella ictaluri (strain 93-146) protein is Bifunctional protein HldE.